Reading from the N-terminus, the 395-residue chain is Endophilin-B2 (395 aa).

Position 1 is an N-acetylmethionine (methionine 1). A membrane-binding amphipathic helix region spans residues methionine 1–phenylalanine 27. Serine 10 carries the post-translational modification Phosphoserine. The BAR domain maps to glutamate 24–glycine 287. 2 coiled-coil regions span residues isoleucine 116–phenylalanine 132 and alanine 206–glutamate 240. One can recognise an SH3 domain in the interval serine 335–serine 395. Position 395 is a phosphoserine (serine 395).

The protein belongs to the endophilin family. Homodimer, and heterodimer with SH3GLB1. Detected in skeletal muscle, adipocyte, brain, lung, colon and mammary gland.

It is found in the cytoplasm. In Homo sapiens (Human), this protein is Endophilin-B2 (SH3GLB2).